Here is a 306-residue protein sequence, read N- to C-terminus: Protein YIPF1 (306 aa).

The Cytoplasmic portion of the chain corresponds to 1-119 (MAAVDDLQFE…VRLYIRSNPD (119 aa)). Residues 33-59 (PSVSFKHQPRPPGSLGREEDEELLGTN) are disordered. The segment covering 50–59 (EEDEELLGTN) has biased composition (acidic residues). The helical transmembrane segment at 120–140 (LYGPFWICATLVFAIAISGNL) threads the bilayer. The Lumenal segment spans residues 141 to 162 (SNFLIHLGEKTYHYVPEFQKVS). Residues 163–183 (IAATVIYAYAWLVPLALWGFL) form a helical membrane-spanning segment. The Cytoplasmic portion of the chain corresponds to 184 to 200 (LWRNSKVMNIVSYSFLE). The helical transmembrane segment at 201–221 (IVCVYGYSLFIYIPTAVLWII) threads the bilayer. The Lumenal segment spans residues 222-227 (PQRVIR). A helical membrane pass occupies residues 228-248 (WVLVTIALGISGSVLAMTFWP). Over 249-256 (AVREDNRR) the chain is Cytoplasmic. Residues 257–277 (VALATIVTIMLLHVLLSVGCL) traverse the membrane as a helical segment. Residues 278–306 (AYFFDAPEMDHLPAAITTPNQTVAAAKSS) are Lumenal-facing. Residue N297 is glycosylated (N-linked (GlcNAc...) asparagine).

It belongs to the YIP1 family. As to quaternary structure, interacts with YIPF6; this interaction may stabilize YIPF1. May also form a ternary complex with YIPF2 and YIPF6.

It is found in the golgi apparatus. The protein resides in the cis-Golgi network membrane. Its subcellular location is the trans-Golgi network membrane. It localises to the late endosome membrane. This is Protein YIPF1 (Yipf1) from Rattus norvegicus (Rat).